A 155-amino-acid chain; its full sequence is Interleukin-36 receptor antagonist protein (155 aa).

An intrachain disulfide couples Cys8 to Cys154.

It belongs to the IL-1 family. Interacts with cargo receptor TMED10; the interaction mediates the translocation from the cytoplasm into the ERGIC (endoplasmic reticulum-Golgi intermediate compartment) and thereby secretion. In terms of tissue distribution, predominantly expressed in skin keratinocytes but not in fibroblasts, endothelial cells or melanocytes. Detected also in the spleen, brain leukocyte and macrophage cell types. Increased in lesional psoriasis skin.

It is found in the cytoplasm. The protein localises to the secreted. In terms of biological role, inhibits the activity of interleukin-36 (IL36A,IL36B and IL36G) by binding to receptor IL1RL2 and preventing its association with the coreceptor IL1RAP for signaling. Part of the IL-36 signaling system that is thought to be present in epithelial barriers and to take part in local inflammatory response; similar to the IL-1 system with which it shares the coreceptor. Proposed to play a role in skin inflammation. May be involved in the innate immune response to fungal pathogens, such as Aspergillus fumigatus. May activate an anti-inflammatory signaling pathway by recruiting SIGIRR. This Homo sapiens (Human) protein is Interleukin-36 receptor antagonist protein.